A 256-amino-acid chain; its full sequence is DNA repair protein RecO (256 aa).

It belongs to the RecO family.

In terms of biological role, involved in DNA repair and RecF pathway recombination. The sequence is that of DNA repair protein RecO from Streptococcus pneumoniae serotype 2 (strain D39 / NCTC 7466).